We begin with the raw amino-acid sequence, 368 residues long: Phosphoribosylformylglycinamidine cyclo-ligase (368 aa).

Belongs to the AIR synthase family.

The protein resides in the cytoplasm. It carries out the reaction 2-formamido-N(1)-(5-O-phospho-beta-D-ribosyl)acetamidine + ATP = 5-amino-1-(5-phospho-beta-D-ribosyl)imidazole + ADP + phosphate + H(+). It participates in purine metabolism; IMP biosynthesis via de novo pathway; 5-amino-1-(5-phospho-D-ribosyl)imidazole from N(2)-formyl-N(1)-(5-phospho-D-ribosyl)glycinamide: step 2/2. The chain is Phosphoribosylformylglycinamidine cyclo-ligase from Novosphingobium aromaticivorans (strain ATCC 700278 / DSM 12444 / CCUG 56034 / CIP 105152 / NBRC 16084 / F199).